Reading from the N-terminus, the 88-residue chain is Small ribosomal subunit protein bS20 (88 aa).

The interval 1 to 28 is disordered; sequence MANIKSQIKRNKTNEKARLRNKAVKSSL.

It belongs to the bacterial ribosomal protein bS20 family.

Its function is as follows. Binds directly to 16S ribosomal RNA. The protein is Small ribosomal subunit protein bS20 of Streptomyces avermitilis (strain ATCC 31267 / DSM 46492 / JCM 5070 / NBRC 14893 / NCIMB 12804 / NRRL 8165 / MA-4680).